Consider the following 575-residue polypeptide: DNA-directed RNA polymerase subunit beta' (575 aa).

Residues Cys-64, Cys-66, Cys-85, and Cys-88 each contribute to the Zn(2+) site. Mg(2+)-binding residues include Asp-440, Asp-442, and Asp-444.

The protein belongs to the RNA polymerase beta' chain family. RpoC1 subfamily. In terms of assembly, in plastids the minimal PEP RNA polymerase catalytic core is composed of four subunits: alpha, beta, beta', and beta''. When a (nuclear-encoded) sigma factor is associated with the core the holoenzyme is formed, which can initiate transcription. It depends on Mg(2+) as a cofactor. Zn(2+) is required as a cofactor.

The protein resides in the plastid. The catalysed reaction is RNA(n) + a ribonucleoside 5'-triphosphate = RNA(n+1) + diphosphate. DNA-dependent RNA polymerase catalyzes the transcription of DNA into RNA using the four ribonucleoside triphosphates as substrates. The sequence is that of DNA-directed RNA polymerase subunit beta' from Euglena longa (Euglenophycean alga).